The following is a 147-amino-acid chain: Arginine vasopressin-induced protein 1 (147 aa).

Disordered regions lie at residues 1–24 (MGTPASVVSEPPPWQAPIEARGRK) and 104–147 (LANP…QIRH). Positions 105–119 (ANPQSATETASSEQY) are enriched in polar residues. Residues 121–134 (HSRKKSARIRRNWR) are compositionally biased toward basic residues. The segment covering 137-147 (GPTSYLHQIRH) has biased composition (polar residues).

In terms of biological role, may be involved in MAP kinase activation, epithelial sodium channel (ENaC) down-regulation and cell cycling. This chain is Arginine vasopressin-induced protein 1 (AVPI1), found in Homo sapiens (Human).